The chain runs to 221 residues: Small ribosomal subunit protein uS5 (221 aa).

The S5 DRBM domain occupies Leu46–Ile109.

It belongs to the universal ribosomal protein uS5 family. Part of the 30S ribosomal subunit. Contacts protein S4.

Its function is as follows. With S4 and S12 plays an important role in translational accuracy. The protein is Small ribosomal subunit protein uS5 of Picrophilus torridus (strain ATCC 700027 / DSM 9790 / JCM 10055 / NBRC 100828 / KAW 2/3).